Reading from the N-terminus, the 372-residue chain is GTPase Obg (372 aa).

Residues 1 to 159 (MKFIDEARIE…RMLKLELKVL (159 aa)) form the Obg domain. The interval 128-147 (LHFKSSTNRAPRQKTDGKPG) is disordered. One can recognise an OBG-type G domain in the interval 160-334 (ADVGLLGMPN…LVYAIHDYLV (175 aa)). Residues 166–173 (GMPNAGKS), 191–195 (FTTLA), 213–216 (DIPG), 284–287 (NKLD), and 315–317 (SAL) each bind GTP. Mg(2+) contacts are provided by serine 173 and threonine 193.

This sequence belongs to the TRAFAC class OBG-HflX-like GTPase superfamily. OBG GTPase family. Monomer. Mg(2+) is required as a cofactor.

Its subcellular location is the cytoplasm. Its function is as follows. An essential GTPase which binds GTP, GDP and possibly (p)ppGpp with moderate affinity, with high nucleotide exchange rates and a fairly low GTP hydrolysis rate. Plays a role in control of the cell cycle, stress response, ribosome biogenesis and in those bacteria that undergo differentiation, in morphogenesis control. The polypeptide is GTPase Obg (Burkholderia pseudomallei (strain 668)).